We begin with the raw amino-acid sequence, 430 residues long: Tektin-2 (430 aa).

2 coiled-coil regions span residues 81-162 (CLTD…FEKL) and 265-379 (FRKR…DIAC).

The protein belongs to the tektin family. In terms of assembly, microtubule inner protein component of sperm flagellar doublet microtubules. May interact with CCDC172. In terms of processing, tyrosine phosphorylated. Ubiquitinated, leading to its degradation. Deubiquitinated by USP16, promoting its stability. Expressed in trachea multiciliated cells.

Its subcellular location is the cytoplasm. It is found in the cytoskeleton. The protein resides in the cilium axoneme. The protein localises to the flagellum axoneme. It localises to the microtubule organizing center. Its function is as follows. Microtubule inner protein (MIP) part of the dynein-decorated doublet microtubules (DMTs) in cilia and flagellar axoneme. Plays a key role in the assembly or attachment of the inner dynein arm to microtubules in sperm flagella and tracheal cilia. Forms filamentous polymers in the walls of ciliary and flagellar microtubules. The sequence is that of Tektin-2 (TEKT2) from Bos taurus (Bovine).